The sequence spans 544 residues: Membrane protein insertase YidC (544 aa).

The disordered stretch occupies residues 29-58 (TPKADPSATTQTLNPTSSESEDYVPTSSDS). A compositionally biased stretch (polar residues) spans 35–46 (SATTQTLNPTSS). Transmembrane regions (helical) follow at residues 341–361 (FVLLKWLHSILGNWGVAIIAI), 421–441 (GGCFPILLQMPIFLALFYVFL), and 499–519 (PVIFSVFFLWFPSGLVLYWLV).

It belongs to the OXA1/ALB3/YidC family. Type 1 subfamily. As to quaternary structure, interacts with the Sec translocase complex via SecD. Specifically interacts with transmembrane segments of nascent integral membrane proteins during membrane integration.

Its subcellular location is the cell inner membrane. Functionally, required for the insertion and/or proper folding and/or complex formation of integral membrane proteins into the membrane. Involved in integration of membrane proteins that insert both dependently and independently of the Sec translocase complex, as well as at least some lipoproteins. Aids folding of multispanning membrane proteins. The sequence is that of Membrane protein insertase YidC from Pseudoalteromonas translucida (strain TAC 125).